Reading from the N-terminus, the 87-residue chain is MKTKLNELLEFPTPFTYKVMGQALPELVDQVVEVVQRHAPGDYSPTVKPSSKGNYHSVSITINATHIEQVETLYEELGNIDIVRMVL.

The protein belongs to the UPF0250 family.

The sequence is that of UPF0250 protein CKO_02527 from Citrobacter koseri (strain ATCC BAA-895 / CDC 4225-83 / SGSC4696).